A 614-amino-acid polypeptide reads, in one-letter code: Signal recognition particle receptor subunit alpha homolog (614 aa).

The interval 119 to 244 is disordered; that stretch reads EASAKQVKAP…DRSRDSPDDV (126 aa). Basic and acidic residues predominate over residues 149–160; that stretch reads QDDKKPVEKRVN. The segment covering 164-178 has biased composition (pro residues); that stretch reads APPPSKSQPSSPPTG. A compositionally biased stretch (basic and acidic residues) spans 232–241; it reads ALLDRSRDSP. Phosphoserine is present on residues Ser237 and Ser240. Phosphotyrosine is present on Tyr246. Phosphoserine occurs at positions 268, 278, and 279. Residues 268 to 285 are compositionally biased toward acidic residues; that stretch reads SEDEADNEDASSEGEAEE. The interval 268–290 is disordered; that stretch reads SEDEADNEDASSEGEAEEQVQSK. An NG domain region spans residues 396–613; that stretch reads YTIIFCGVNG…NVNAVVNSLM (218 aa). GTP contacts are provided by residues 402–409, 497–501, and 565–568; these read GVNGVGKS, DTAGR, and TKFD.

Belongs to the GTP-binding SRP family. Heterodimer of SrpRalpha and SrpRbeta. In terms of tissue distribution, in 8-9 hours embryos, expression is seen in a segmental pattern along embryonic ventral midline.

It is found in the endoplasmic reticulum membrane. In terms of biological role, component of the SRP (signal recognition particle) receptor. Ensures, in conjunction with the signal recognition particle, the correct targeting of the nascent secretory proteins to the endoplasmic reticulum membrane system. Forms a guanosine 5'-triphosphate (GTP)-dependent complex with the SRP subunit Srp54. SRP receptor compaction and GTPase rearrangement drive SRP-mediated cotranslational protein translocation into the ER. May have a role in axonogenesis. This Drosophila melanogaster (Fruit fly) protein is Signal recognition particle receptor subunit alpha homolog.